A 92-amino-acid chain; its full sequence is Small ribosomal subunit protein uS19 (92 aa).

Belongs to the universal ribosomal protein uS19 family.

Functionally, protein S19 forms a complex with S13 that binds strongly to the 16S ribosomal RNA. The chain is Small ribosomal subunit protein uS19 from Bacillus cytotoxicus (strain DSM 22905 / CIP 110041 / 391-98 / NVH 391-98).